The sequence spans 184 residues: MNWRSEHIWIEFITGSRKTSNFGWACILFLGSLGFLVVGASSYLGRNLISVFPSQQIVFFPQGIVMSFYGIAGLFISSYLWCTISWNVGSGYDRFDRKEGIVCIFRWGFPGINRRIFLRFFIRDIQSIRIEVKEGLYSRRVLYMEIRGQGAIPLTRTDENLTPREIEQKAADSAYFLRVPIEVF.

The next 2 helical transmembrane spans lie at 22 to 42 (FGWA…GASS) and 57 to 77 (IVFF…LFIS).

The protein belongs to the Ycf4 family.

Its subcellular location is the plastid. It is found in the chloroplast thylakoid membrane. In terms of biological role, seems to be required for the assembly of the photosystem I complex. The chain is Photosystem I assembly protein Ycf4 from Acorus calamus (Sweet flag).